We begin with the raw amino-acid sequence, 248 residues long: Pathogenesis-related thaumatin-like protein 3.4 (248 aa).

A signal peptide spans 1–25; it reads MARAILWVLLTVMAVSLLLHAGVEG. Disulfide bonds link cysteine 34-cysteine 227, cysteine 75-cysteine 85, cysteine 90-cysteine 96, cysteine 141-cysteine 216, cysteine 146-cysteine 199, cysteine 154-cysteine 164, cysteine 168-cysteine 177, and cysteine 178-cysteine 186. The N-linked (GlcNAc...) asparagine glycan is linked to asparagine 235.

Belongs to the thaumatin family. Mainly expressed in male and female strobili, and, at lower levels, in roots of seedlings and saplings.

May be involved in disease resistance. The chain is Pathogenesis-related thaumatin-like protein 3.4 from Cryptomeria japonica (Japanese cedar).